The following is a 394-amino-acid chain: uncharacterized protein (394 aa).

The 45-residue stretch at 7 to 51 (RKVIPNMPDLILRKIFDQYDYPVLCKMERVCRRWTNIINSKFRKE) folds into the F-box domain.

This is an uncharacterized protein from Caenorhabditis elegans.